The chain runs to 339 residues: Fructose-1,6-bisphosphatase class 1 (339 aa).

Residues Glu-94, Asp-116, Leu-118, and Asp-119 each coordinate Mg(2+). Residues 119 to 122 (DGSS), Asn-210, and Lys-276 contribute to the substrate site. Glu-282 contributes to the Mg(2+) binding site.

The protein belongs to the FBPase class 1 family. As to quaternary structure, homotetramer. Mg(2+) serves as cofactor.

The protein localises to the cytoplasm. The catalysed reaction is beta-D-fructose 1,6-bisphosphate + H2O = beta-D-fructose 6-phosphate + phosphate. It participates in carbohydrate biosynthesis; gluconeogenesis. The protein is Fructose-1,6-bisphosphatase class 1 of Burkholderia ambifaria (strain ATCC BAA-244 / DSM 16087 / CCUG 44356 / LMG 19182 / AMMD) (Burkholderia cepacia (strain AMMD)).